The primary structure comprises 255 residues: 4-diphosphocytidyl-2-C-methyl-D-erythritol kinase (255 aa).

The active site involves Lys-6. An ATP-binding site is contributed by 95 to 105 (PVCAGLGGGSS). Residue Asp-137 is part of the active site.

The protein belongs to the GHMP kinase family. IspE subfamily.

The catalysed reaction is 4-CDP-2-C-methyl-D-erythritol + ATP = 4-CDP-2-C-methyl-D-erythritol 2-phosphate + ADP + H(+). Its pathway is isoprenoid biosynthesis; isopentenyl diphosphate biosynthesis via DXP pathway; isopentenyl diphosphate from 1-deoxy-D-xylulose 5-phosphate: step 3/6. Its function is as follows. Catalyzes the phosphorylation of the position 2 hydroxy group of 4-diphosphocytidyl-2C-methyl-D-erythritol. This Campylobacter jejuni subsp. doylei (strain ATCC BAA-1458 / RM4099 / 269.97) protein is 4-diphosphocytidyl-2-C-methyl-D-erythritol kinase.